Reading from the N-terminus, the 412-residue chain is Histidine--tRNA ligase (412 aa).

The protein belongs to the class-II aminoacyl-tRNA synthetase family. In terms of assembly, homodimer.

Its subcellular location is the cytoplasm. The catalysed reaction is tRNA(His) + L-histidine + ATP = L-histidyl-tRNA(His) + AMP + diphosphate + H(+). The polypeptide is Histidine--tRNA ligase (Rickettsia typhi (strain ATCC VR-144 / Wilmington)).